Here is a 201-residue protein sequence, read N- to C-terminus: LexA repressor 1 (201 aa).

The segment at residues Leu-27 to Gln-47 is a DNA-binding region (H-T-H motif). Active-site for autocatalytic cleavage activity residues include Ser-122 and Lys-159.

The protein belongs to the peptidase S24 family. As to quaternary structure, homodimer.

It carries out the reaction Hydrolysis of Ala-|-Gly bond in repressor LexA.. Functionally, represses a number of genes involved in the response to DNA damage (SOS response), including recA and lexA. In the presence of single-stranded DNA, RecA interacts with LexA causing an autocatalytic cleavage which disrupts the DNA-binding part of LexA, leading to derepression of the SOS regulon and eventually DNA repair. The sequence is that of LexA repressor 1 from Xanthomonas oryzae pv. oryzae (strain KACC10331 / KXO85).